Consider the following 504-residue polypeptide: MKNEKRKTGIEPKVFFPPLIIVGILCWLTVRDLDAANVVINAVFSYVTNVWGWAFEWYMVVMLFGWFWLVFGPYAKKRLGNEPPEFSTASWIFMMFASCTSAAVLFWGSIEIYYYISTPPFGLEPNSTGAKELGLAYSLFHWGPLPWATYSFLSVAFAYFFFVRKMEVIRPSSTLVPLVGEKHAKGLFGTIVDNFYLVALIFAMGTSLGLATPLVTECMQWLFGIPHTLQLDAIIITCWIILNAICVACGLQKGVRIASDVRSYLSFLMLGWVFIVSGASFIMNYFTDSVGMLLMYLPRMLFYTDPIAKGGFPQGWTVFYWAWWVIYAIQMSIFLARISRGRTVRELCFGMVLGLTASTWILWTVLGSNTLLLIDKNIINIPNLIEQYGVARAIIETWAALPLSTATMWGFFILCFIATVTLVNACSYTLAMSTCREVRDGEEPPLLVRIGWSVLVGIIGIVLLALGGLKPIQTAIIAGGCPLFFVNIMVTLSFIKDAKQNWKD.

A run of 12 helical transmembrane segments spans residues Ile10–Val30, Trp51–Phe71, Ile92–Ile112, Gly143–Val163, Phe195–Val215, Leu231–Leu251, Ser263–Met283, Trp316–Ala336, Leu347–Gly367, Trp398–Ala418, Leu446–Leu466, and Ala475–Ile495.

It belongs to the BCCT transporter (TC 2.A.15) family. CaiT subfamily. In terms of assembly, homotrimer.

The protein resides in the cell inner membrane. The enzyme catalyses 4-(trimethylamino)butanoate(in) + (R)-carnitine(out) = 4-(trimethylamino)butanoate(out) + (R)-carnitine(in). It functions in the pathway amine and polyamine metabolism; carnitine metabolism. Functionally, catalyzes the exchange of L-carnitine for gamma-butyrobetaine. This chain is L-carnitine/gamma-butyrobetaine antiporter, found in Escherichia coli O6:K15:H31 (strain 536 / UPEC).